The following is a 444-amino-acid chain: Multidrug resistance protein MdtA (444 aa).

The first 20 residues, 1-20 (MKSQSKRTSRLFVFVGVVVA), serve as a signal peptide directing secretion. The span at 37–52 (NNTSGAQQSARGQDTS) shows a compositional bias: polar residues. Disordered stretches follow at residues 37 to 60 (NNTSGAQQSARGQDTSHGGRRNTP) and 398 to 444 (TPRS…AEKS). The segment covering 406-419 (ANPASAEKAAAEAE) has biased composition (low complexity). Over residues 435–444 (ARSTTAAEKS) the composition is skewed to polar residues.

Belongs to the membrane fusion protein (MFP) (TC 8.A.1) family. As to quaternary structure, part of a tripartite efflux system composed of MdtA, MdtB and MdtC.

It is found in the cell inner membrane. This chain is Multidrug resistance protein MdtA, found in Yersinia pestis bv. Antiqua (strain Antiqua).